An 89-amino-acid polypeptide reads, in one-letter code: Small ribosomal subunit protein uS15 (89 aa).

Residues M1 to D21 show a composition bias toward basic and acidic residues. Residues M1–S24 are disordered.

It belongs to the universal ribosomal protein uS15 family. In terms of assembly, part of the 30S ribosomal subunit. Forms a bridge to the 50S subunit in the 70S ribosome, contacting the 23S rRNA.

Functionally, one of the primary rRNA binding proteins, it binds directly to 16S rRNA where it helps nucleate assembly of the platform of the 30S subunit by binding and bridging several RNA helices of the 16S rRNA. Its function is as follows. Forms an intersubunit bridge (bridge B4) with the 23S rRNA of the 50S subunit in the ribosome. This chain is Small ribosomal subunit protein uS15, found in Bacillus subtilis (strain 168).